The chain runs to 55 residues: Mitochondrial import receptor subunit TOM7 homolog (55 aa).

The Cytoplasmic portion of the chain corresponds to 1 to 20 (MVKLSKEAKQRLQQLFKGSQ). Residues 21-36 (FAIRWGFIPLVIYLGF) traverse the membrane as a helical segment. The Mitochondrial intermembrane segment spans residues 37–55 (KRGADPGMPEPTVLSLLWG).

The protein belongs to the Tom7 family. Forms part of the preprotein translocase complex of the outer mitochondrial membrane (TOM complex) which consists of at least 7 different proteins (TOMM5, TOMM6, TOMM7, TOMM20, TOMM22, TOMM40 and TOMM70).

It is found in the mitochondrion outer membrane. Its function is as follows. Required for assembly and stability of the TOM complex. Positive regulator of PRKN translocation to damaged mitochondria. Acts probably by stabilizing PINK1 on the outer membrane of depolarized mitochondria. The sequence is that of Mitochondrial import receptor subunit TOM7 homolog (TOMM7) from Homo sapiens (Human).